Here is an 842-residue protein sequence, read N- to C-terminus: Xyloglucanase Xgh74A (842 aa).

An N-terminal signal peptide occupies residues 1 to 32 (MVKKFTSKIKAAVFAAVVAATAIFGPAISSQA). Asp-70 functions as the Nucleophile in the catalytic mechanism. BNR repeat units follow at residues 134–144 (RSTDRGETWEK), 185–196 (WRSTDYGVTWSK), 252–262 (YRSTDGGVTWK), and 358–368 (FRSTDGGATWK). Asp-480 functions as the Proton donor in the catalytic mechanism. BNR repeat units follow at residues 533-541 (FSYDGGRNW), 577-586 (VTTDNGNSWK), 616-626 (YISTDGGLTFT), 660-671 (WRSTDGGYTFEK), and 708-718 (FRSDDAGKTWV). Positions 771-841 (DKGLVGDLNG…LLQAIPELPK (71 aa)) constitute a Dockerin domain.

It belongs to the glycosyl hydrolase 74 family.

Hydrolyzes the glucosidic bonds of unbranched Glc residues in tamarind seed xyloglucan, producing XXXG, XLXG, XXLG and XLLG. Has low activity on carboxymethylcellulose, lichenan,hydroxyethylcellulose and glucuronoxylan, and no activity on xylan, polygalaturonic acid, wheat arabinoxylan, rhamnogalacturan, curdlan, laminarin, galactomannan, galactan, arabinan and pachyman or amorphous cellulose. This is Xyloglucanase Xgh74A from Acetivibrio thermocellus (Hungateiclostridium thermocellum).